Reading from the N-terminus, the 481-residue chain is Ribulose bisphosphate carboxylase large chain (481 aa).

The propeptide occupies 1–2; sequence MS. P3 carries the post-translational modification N-acetylproline. An N6,N6,N6-trimethyllysine modification is found at K14. 2 residues coordinate substrate: N123 and T173. The Proton acceptor role is filled by K175. K177 is a substrate binding site. K201, D203, and E204 together coordinate Mg(2+). K201 carries the post-translational modification N6-carboxylysine. The Proton acceptor role is filled by H294. Substrate-binding residues include R295, H327, and S379.

Belongs to the RuBisCO large chain family. Type I subfamily. In terms of assembly, heterohexadecamer of 8 large chains and 8 small chains; disulfide-linked. The disulfide link is formed within the large subunit homodimers. Requires Mg(2+) as cofactor. The disulfide bond which can form in the large chain dimeric partners within the hexadecamer appears to be associated with oxidative stress and protein turnover.

The protein localises to the plastid. The protein resides in the chloroplast. It carries out the reaction 2 (2R)-3-phosphoglycerate + 2 H(+) = D-ribulose 1,5-bisphosphate + CO2 + H2O. The enzyme catalyses D-ribulose 1,5-bisphosphate + O2 = 2-phosphoglycolate + (2R)-3-phosphoglycerate + 2 H(+). Its function is as follows. RuBisCO catalyzes two reactions: the carboxylation of D-ribulose 1,5-bisphosphate, the primary event in carbon dioxide fixation, as well as the oxidative fragmentation of the pentose substrate in the photorespiration process. Both reactions occur simultaneously and in competition at the same active site. This chain is Ribulose bisphosphate carboxylase large chain, found in Coffea arabica (Arabian coffee).